We begin with the raw amino-acid sequence, 600 residues long: Forkhead box protein O (600 aa).

Residue threonine 49 is modified to Phosphothreonine; by PKB/AKT1. Phosphoserine is present on serine 80. Residues 100–206 (WGNLSYADLI…ETSRYEKRRG (107 aa)) constitute a DNA-binding region (fork-head). 4 disordered regions span residues 187–210 (KSVRRRAASMETSRYEKRRGRAKK), 222–283 (GLND…LEPD), 319–364 (QQGF…TPGY), and 580–600 (LNARVQYSQPSVVTSPPSWVH). Position 195 is a phosphoserine; by PKB/AKT1 (serine 195). 2 stretches are compositionally biased toward polar residues: residues 226–235 (ATPSPSSSVS) and 261–270 (RASSNASSCG). At serine 264 the chain carries Phosphoserine; by PKB/AKT1. Serine 267, serine 268, and serine 273 each carry phosphoserine. Positions 330 to 342 (TQPPPPPYQPPQP) are enriched in pro residues. The span at 343–354 (QQQQQQGQQPSP) shows a compositional bias: low complexity.

As to quaternary structure, interacts with melt.

The protein localises to the cytoplasm. The protein resides in the nucleus. Functionally, transcription factor involved in the regulation of the insulin signaling pathway. Consistently activates both the downstream target Thor\d4EBP and the feedback control target InR. Involved in negative regulation of the cell cycle, modulating cell growth and proliferation. In response to cellular stresses, such as nutrient deprivation or increased levels of reactive oxygen species, foxo is activated and inhibits growth through the action of target genes such as Thor. Foxo activated in the adult fat body can regulate lifespan in adults; an insulin peptide itself may function as one secondary messenger of insulin-regulated aging. Also regulates Lip4, homolog of human acid lipases, thereby acting as a key modulator of lipid metabolism by insulin signaling and integrates insulin responses to glucose and lipid homeostasis. This chain is Forkhead box protein O, found in Drosophila ananassae (Fruit fly).